The chain runs to 291 residues: Phosphate import ATP-binding protein PstB (291 aa).

An ABC transporter domain is found at 44–286; it reads VKAREVNVFY…PEEKRTQDYI (243 aa). Residue 76 to 83 participates in ATP binding; that stretch reads GPSGCGKS.

This sequence belongs to the ABC transporter superfamily. Phosphate importer (TC 3.A.1.7) family. The complex is composed of two ATP-binding proteins (PstB), two transmembrane proteins (PstC and PstA) and a solute-binding protein (PstS).

The protein localises to the cell inner membrane. It catalyses the reaction phosphate(out) + ATP + H2O = ADP + 2 phosphate(in) + H(+). Part of the ABC transporter complex PstSACB involved in phosphate import. Responsible for energy coupling to the transport system. This Chelativorans sp. (strain BNC1) protein is Phosphate import ATP-binding protein PstB.